The following is a 614-amino-acid chain: uncharacterized protein (614 aa).

A disordered region spans residues Y23–P68. Residues K49 to P68 are compositionally biased toward polar residues.

To C.trachomatis CT875.

This is an uncharacterized protein from Chlamydia muridarum (strain MoPn / Nigg).